Reading from the N-terminus, the 465-residue chain is Pancreatic triacylglycerol lipase (465 aa).

Positions 1–16 are cleaved as a signal peptide; it reads MLMLWTFAVLLGAVAG. Intrachain disulfides connect cysteine 20/cysteine 26 and cysteine 107/cysteine 118. Serine 169 serves as the catalytic Nucleophile. Residue aspartate 193 is the Charge relay system of the active site. Positions 204, 207, 209, and 212 each coordinate Ca(2+). Cysteine 254 and cysteine 278 are disulfide-bonded. The active-site Charge relay system is the histidine 280. Cystine bridges form between cysteine 302–cysteine 313, cysteine 316–cysteine 321, and cysteine 449–cysteine 465. The region spanning 355 to 465 is the PLAT domain; sequence WRYQVTVTLS…EDVLLTLSPC (111 aa).

The protein belongs to the AB hydrolase superfamily. Lipase family. In terms of assembly, forms a 1:1 stoichiometric complex with (pro)colipase/CLPS. Pancreas.

The protein localises to the secreted. The catalysed reaction is a triacylglycerol + H2O = a diacylglycerol + a fatty acid + H(+). It carries out the reaction 1,2,3-tri-(9Z-octadecenoyl)-glycerol + H2O = di-(9Z)-octadecenoylglycerol + (9Z)-octadecenoate + H(+). It catalyses the reaction 1,2,3-tributanoylglycerol + H2O = dibutanoylglycerol + butanoate + H(+). The enzyme catalyses all-trans-retinyl hexadecanoate + H2O = all-trans-retinol + hexadecanoate + H(+). The catalysed reaction is 1,2-di-(9Z-octadecenoyl)-glycerol + H2O = (9Z-octadecenoyl)-glycerol + (9Z)-octadecenoate + H(+). Its activity is regulated as follows. Inhibited by bile salts, is reactivated by (pro)colipase/CLPS. Plays an important role in fat metabolism. It preferentially splits the esters of long-chain fatty acids at positions 1 and 3, producing mainly 2-monoacylglycerol and free fatty acids, and shows considerably higher activity against insoluble emulsified substrates than against soluble ones. This Mus musculus (Mouse) protein is Pancreatic triacylglycerol lipase.